Here is a 506-residue protein sequence, read N- to C-terminus: Chromosomal replication initiator protein DnaA (506 aa).

Positions Met-1 to Arg-87 are domain I, interacts with DnaA modulators. The interval Arg-87–Ser-169 is domain II. The interval Asp-135–Ala-154 is disordered. Positions Ala-139–Pro-148 are enriched in low complexity. Residues Tyr-170–Ser-386 form a domain III, AAA+ region region. ATP is bound by residues Gly-214, Gly-216, Lys-217, and Thr-218. A domain IV, binds dsDNA region spans residues His-387 to Thr-506.

This sequence belongs to the DnaA family. Oligomerizes as a right-handed, spiral filament on DNA at oriC.

The protein resides in the cytoplasm. In terms of biological role, plays an essential role in the initiation and regulation of chromosomal replication. ATP-DnaA binds to the origin of replication (oriC) to initiate formation of the DNA replication initiation complex once per cell cycle. Binds the DnaA box (a 9 base pair repeat at the origin) and separates the double-stranded (ds)DNA. Forms a right-handed helical filament on oriC DNA; dsDNA binds to the exterior of the filament while single-stranded (ss)DNA is stabiized in the filament's interior. The ATP-DnaA-oriC complex binds and stabilizes one strand of the AT-rich DNA unwinding element (DUE), permitting loading of DNA polymerase. After initiation quickly degrades to an ADP-DnaA complex that is not apt for DNA replication. Binds acidic phospholipids. Non-cooperatively binds DnaA boxes in the minimal plasmid RK2 replication origin (oriV). In vitro in the presence of plasmid RK2-derived TrfA and E.coli protein HU, forms an open complex at oriV. This complex was not however competent for formation of a pre-priming complex with E.coli DnaB and DnaC. Broad host range plasmid RK2 requires not only DnaA for replication but also TrfA and host factors. The polypeptide is Chromosomal replication initiator protein DnaA (Pseudomonas putida (strain ATCC 47054 / DSM 6125 / CFBP 8728 / NCIMB 11950 / KT2440)).